The primary structure comprises 250 residues: UPF0309 protein BH0227 (250 aa).

Positions 31–214 (VAESIQNGGI…KRMADNGYEP (184 aa)) constitute an SIS domain.

This sequence belongs to the UPF0309 family.

The sequence is that of UPF0309 protein BH0227 from Halalkalibacterium halodurans (strain ATCC BAA-125 / DSM 18197 / FERM 7344 / JCM 9153 / C-125) (Bacillus halodurans).